Here is a 332-residue protein sequence, read N- to C-terminus: MATLKDQLIHNLLKEEHVPHNKITVVGVGAVGMACAISILMKELADEIALVDVMEDKLKGEMMDLQHGSLFLRTPKIVSGKDYNVTANSRLVVITAGARQQEGESRLNLVQRNVNIFKFIIPNIVKYSPNCKLLVVSNPVDILTYVAWKISGFPKNRVIGSGCNLDSARFRYLMGERLGVHPLSCHGWILGEHGDSSVPVWSGVNVAGVSLKNLHPELGTDADKEHWKAVHKQVVDSAYEVIKLKGYTSWAIGLSVADLAESIMKNLRRVHPISTMIKGLYGIKEDVFLSVPCILGQNGISDVVKVTLTPEEEAHLKKSADTLWGIQKELQF.

Ala-2 carries the N-acetylalanine modification. The residue at position 5 (Lys-5) is an N6-acetyllysine; alternate. Lys-5 is subject to N6-succinyllysine; alternate. Residue Lys-14 is modified to N6-acetyllysine. 29-57 (GAVGMACAISILMKELADEIALVDVMEDK) lines the NAD(+) pocket. Residue Lys-57 is modified to N6-acetyllysine; alternate. Residue Lys-57 forms a Glycyl lysine isopeptide (Lys-Gly) (interchain with G-Cter in SUMO2); alternate linkage. N6-acetyllysine is present on Lys-81. Arg-99 is a binding site for NAD(+). Arg-106 is a binding site for substrate. The residue at position 118 (Lys-118) is an N6-acetyllysine; alternate. The residue at position 118 (Lys-118) is an N6-succinyllysine; alternate. Lys-126 is modified (N6-acetyllysine). Asn-138 serves as a coordination point for NAD(+). Residues Asn-138 and Arg-169 each contribute to the substrate site. His-193 acts as the Proton acceptor in catalysis. N6-acetyllysine is present on residues Lys-224 and Lys-232. Tyr-239 carries the post-translational modification Phosphotyrosine. Lys-243 bears the N6-acetyllysine mark. Thr-248 is a binding site for substrate. Thr-309 is subject to Phosphothreonine. Position 318 is an N6-acetyllysine; alternate (Lys-318). Lys-318 is subject to N6-succinyllysine; alternate. The residue at position 322 (Thr-322) is a Phosphothreonine.

This sequence belongs to the LDH/MDH superfamily. LDH family. In terms of assembly, homotetramer. Interacts with PTEN upstream reading frame protein MP31. In terms of processing, ISGylated.

The protein resides in the cytoplasm. It carries out the reaction (S)-lactate + NAD(+) = pyruvate + NADH + H(+). The protein operates within fermentation; pyruvate fermentation to lactate; (S)-lactate from pyruvate: step 1/1. Functionally, interconverts simultaneously and stereospecifically pyruvate and lactate with concomitant interconversion of NADH and NAD(+). The protein is L-lactate dehydrogenase A chain (LDHA) of Sus scrofa (Pig).